The chain runs to 207 residues: Protein 6b (207 aa).

The interval 161–185 is disordered; that stretch reads NTLEEGEDDDDEMDDEGEAGGAEPR. Residues 164–178 show a composition bias toward acidic residues; that stretch reads EEGEDDDDEMDDEGE.

Its function is as follows. Involved in tumor formation and increases auxin and cytokinin effects in host plants. This Agrobacterium tumefaciens (strain 15955) protein is Protein 6b (6b).